Reading from the N-terminus, the 160-residue chain is Protein-export protein SecB (160 aa).

The protein belongs to the SecB family. In terms of assembly, homotetramer, a dimer of dimers. One homotetramer interacts with 1 SecA dimer.

The protein resides in the cytoplasm. Functionally, one of the proteins required for the normal export of preproteins out of the cell cytoplasm. It is a molecular chaperone that binds to a subset of precursor proteins, maintaining them in a translocation-competent state. It also specifically binds to its receptor SecA. The chain is Protein-export protein SecB from Nitrosomonas eutropha (strain DSM 101675 / C91 / Nm57).